We begin with the raw amino-acid sequence, 509 residues long: Proline-rich receptor-like protein kinase PERK15 (509 aa).

Residues 1 to 44 (MSTDTIPSLSSPPAPEFPSTTPDTATSPAPSQPSIIGPSSLAPF) are disordered. The Extracellular segment spans residues 1–61 (MSTDTIPSLS…DGGSRNVALT (61 aa)). The span at 18–34 (PSTTPDTATSPAPSQPS) shows a compositional bias: low complexity. The chain crosses the membrane as a helical span at residues 62 to 82 (GLITGVVLGATFVLLGVCIFV). Topologically, residues 83–509 (CFYKRKKRKL…IEPEKNTKDT (427 aa)) are cytoplasmic. Residue Thr132 is modified to Phosphothreonine. Residues 143–423 (FSNTNLLGQG…VRAFEGNISI (281 aa)) enclose the Protein kinase domain. Residues 149 to 157 (LGQGGFGYV) and Lys171 contribute to the ATP site. Phosphotyrosine is present on Tyr216. The active-site Proton acceptor is the Asp267. Ser300 carries the phosphoserine modification. Phosphothreonine is present on residues Thr301 and Thr306. At Tyr314 the chain carries Phosphotyrosine. A compositionally biased stretch (polar residues) spans 468 to 499 (FGSSECSGLTSDNGQNPSGSSSITEGQRTTQE). Residues 468–509 (FGSSECSGLTSDNGQNPSGSSSITEGQRTTQEIEPEKNTKDT) are disordered.

Belongs to the protein kinase superfamily. Ser/Thr protein kinase family. In terms of tissue distribution, mostly expressed in inflorescence bolts, and, to a lower extent, in flower buds and siliques.

The protein resides in the cell membrane. The enzyme catalyses L-seryl-[protein] + ATP = O-phospho-L-seryl-[protein] + ADP + H(+). It catalyses the reaction L-threonyl-[protein] + ATP = O-phospho-L-threonyl-[protein] + ADP + H(+). The sequence is that of Proline-rich receptor-like protein kinase PERK15 (PERK15) from Arabidopsis thaliana (Mouse-ear cress).